A 510-amino-acid chain; its full sequence is 2-isopropylmalate synthase (510 aa).

In terms of domain architecture, Pyruvate carboxyltransferase spans 5 to 267; that stretch reads LIIFDTTLRD…DTRIDSVHIV (263 aa). 4 residues coordinate Mn(2+): aspartate 14, histidine 202, histidine 204, and asparagine 238. Residues 392-510 are regulatory domain; sequence KLLSLTAHSE…SKLERAHPQV (119 aa).

This sequence belongs to the alpha-IPM synthase/homocitrate synthase family. LeuA type 1 subfamily. Homodimer. Mn(2+) is required as a cofactor.

It is found in the cytoplasm. The enzyme catalyses 3-methyl-2-oxobutanoate + acetyl-CoA + H2O = (2S)-2-isopropylmalate + CoA + H(+). It participates in amino-acid biosynthesis; L-leucine biosynthesis; L-leucine from 3-methyl-2-oxobutanoate: step 1/4. In terms of biological role, catalyzes the condensation of the acetyl group of acetyl-CoA with 3-methyl-2-oxobutanoate (2-ketoisovalerate) to form 3-carboxy-3-hydroxy-4-methylpentanoate (2-isopropylmalate). In Nitrosospira multiformis (strain ATCC 25196 / NCIMB 11849 / C 71), this protein is 2-isopropylmalate synthase.